A 514-amino-acid polypeptide reads, in one-letter code: Triacylglyceride transporter MAB_2807 (514 aa).

11 helical membrane-spanning segments follow: residues 19–39, 58–78, 88–108, 118–138, 157–177, 178–198, 210–230, 239–259, 278–298, 316–336, and 344–364; these read IAIG…YVVV, QVTP…PLLG, LILQ…ALST, VIQG…GADL, LGSV…GSWT, AIFW…QFSV, VDVV…VGLY, LPEW…AFIL, PFFA…VTLV, VFLL…GGWL, and IIAV…SGWP. Residues 371–380 are beta-hairpin; sequence VHNFGFFTLP. 3 helical membrane passes run 385–405, 420–440, and 485–505; these read DLVV…SAAL, VVVA…GWGI, and MFAI…FVGS.

The protein belongs to the major facilitator superfamily. P55 (TC 2.A.1.3.34) family.

The protein localises to the cell inner membrane. In association with lipoprotein LprG probably transports triacyglycerides (TAG) across the inner cell membrane into the periplasm; TAG probably regulates lipid metabolism and growth regulation and plays a structural role in the outer membrane. TAG (and maybe other lipids) enters the central cavity of the P55 transporter from within the cell inner membrane via clefts on the cytoplasmic face of P55 between TM5-TM8 and TM2-TM11. From there the lipid is probably transferred to the hydrophobic cavity of LprG. Involved in drug susceptibilty, its expression partially complements the antibiotic susceptibilty of a double lprG-mfs deletion. Probably does not function as a bona fide drug efflux pump, but instead plays a role in outer membrane biogenesis. Probably required with LprG for normal surface localization of lipoarabinomannan (LAM). This is Triacylglyceride transporter MAB_2807 from Mycobacteroides abscessus (strain ATCC 19977 / DSM 44196 / CCUG 20993 / CIP 104536 / JCM 13569 / NCTC 13031 / TMC 1543 / L948) (Mycobacterium abscessus).